Here is a 321-residue protein sequence, read N- to C-terminus: Methionyl-tRNA formyltransferase (321 aa).

Ser112–Pro115 contacts (6S)-5,6,7,8-tetrahydrofolate.

The protein belongs to the Fmt family.

It catalyses the reaction L-methionyl-tRNA(fMet) + (6R)-10-formyltetrahydrofolate = N-formyl-L-methionyl-tRNA(fMet) + (6S)-5,6,7,8-tetrahydrofolate + H(+). In terms of biological role, attaches a formyl group to the free amino group of methionyl-tRNA(fMet). The formyl group appears to play a dual role in the initiator identity of N-formylmethionyl-tRNA by promoting its recognition by IF2 and preventing the misappropriation of this tRNA by the elongation apparatus. In Shewanella pealeana (strain ATCC 700345 / ANG-SQ1), this protein is Methionyl-tRNA formyltransferase.